Reading from the N-terminus, the 53-residue chain is MFRWGIIFLVIALIAAALGFGGLAGTAAGAAKIVFVVGIILFLVSLFTGRKRP.

2 helical membrane passes run 4–24 (WGIIFLVIALIAAALGFGGLA) and 30–47 (AAKIVFVVGIILFLVSLF).

It belongs to the UPF0391 family.

It is found in the cell membrane. In Pectobacterium atrosepticum (strain SCRI 1043 / ATCC BAA-672) (Erwinia carotovora subsp. atroseptica), this protein is UPF0391 membrane protein ECA0470.